Reading from the N-terminus, the 470-residue chain is Trigger factor (470 aa).

The region spanning 164-243 (GDYVVIDMTA…VTAVKVQELP (80 aa)) is the PPIase FKBP-type domain. Acidic residues-rich tracts occupy residues 424 to 438 (ETDA…ESVE) and 445 to 470 (AEDD…AAKA). The interval 424-470 (ETDAEDAAEGVESVEVDLSAAAEDDAEETSDEPAAEDTATEDEAAKA) is disordered.

This sequence belongs to the FKBP-type PPIase family. Tig subfamily.

It localises to the cytoplasm. It catalyses the reaction [protein]-peptidylproline (omega=180) = [protein]-peptidylproline (omega=0). Involved in protein export. Acts as a chaperone by maintaining the newly synthesized protein in an open conformation. Functions as a peptidyl-prolyl cis-trans isomerase. In Beutenbergia cavernae (strain ATCC BAA-8 / DSM 12333 / CCUG 43141 / JCM 11478 / NBRC 16432 / NCIMB 13614 / HKI 0122), this protein is Trigger factor.